A 417-amino-acid chain; its full sequence is Zinc finger protein CONSTANS-LIKE 16 (417 aa).

4 residues coordinate Zn(2+): C17, C20, C40, and H45. The B box-type; atypical zinc finger occupies 17–59 (CDSCVKRRARWYCAADDAFLCQSCDSLVHSANPLARRHERVRL). Positions 63 to 105 (SPAVVKHSNHSSASPPHEVATWHHGFTRKARTPRGSGKKNNSS) are disordered. A coiled-coil region spans residues 212 to 239 (LSNSEMFKIEKDEIEEEVEEIKAMSMDI). The CCT domain occupies 361 to 403 (REARVSRYREKRRTRLFSKKIRYEVRKLNAEKRPRMKGRFVKR).

Belongs to the CONSTANS family.

It is found in the nucleus. The polypeptide is Zinc finger protein CONSTANS-LIKE 16 (COL16) (Arabidopsis thaliana (Mouse-ear cress)).